The chain runs to 176 residues: uncharacterized protein (176 aa).

Belongs to the mimivirus R160 family.

This is an uncharacterized protein from Acanthamoeba polyphaga mimivirus (APMV).